The following is a 517-amino-acid chain: MSLIERIKNVVWPKDTLSVVWLYTIGSIFWLGVLGIAAMNLRTFLTYDQNSPNVGELYYSALTIHGWAAMIAFVPMAAAAVIGFSLYKSKLSIIHTKQMAIFFWLSNVLLGIAMAGSPDMGWYMYPPLAIESNSQFHAFLFYTTPQLMGMAYLVMSIAVILQTAAFVTLIADAYATKPKGERLNIFAAYGVAFSIVIAVTLPALAAATLWYTLYFFANVPVNNLLWAILFWFYGHPVVYYVPFPLFGALYYYIPQYAGRSLYSEKWARWNIYLLAIGTMGVWVHHLQTWPLPIVLREWVNLSTLILATGSGLTVLNLGLTIFTSRKYDWKDPVGMGALISLIGFILAGAQALVLPENSINPLFHNSYYVVGHFHLMIWTLIIMGYTTVFLDMLRTSFAGFNFSATSSKWMRIGMIWWTAPFMGVGYAMSVAGYLGFLRRMIAYPVIFQPYNLVESFLAEIGIPGLLLTLFVGMFDALAYASKQPVFSSPSVSSFSMQVDKGELVKKIDSEKGVNNVG.

A run of 12 helical transmembrane segments spans residues 19–39 (VVWLYTIGSIFWLGVLGIAAM), 64–84 (IHGWAAMIAFVPMAAAAVIGF), 98–118 (QMAIFFWLSNVLLGIAMAGSP), 150–170 (MAYLVMSIAVILQTAAFVTLI), 185–205 (IFAAYGVAFSIVIAVTLPALA), 226–246 (WAILFWFYGHPVVYYVPFPLF), 271–291 (IYLLAIGTMGVWVHHLQTWPL), 303–323 (TLILATGSGLTVLNLGLTIFT), 333–353 (VGMGALISLIGFILAGAQALV), 369–389 (VVGHFHLMIWTLIIMGYTTVF), 412–432 (IGMIWWTAPFMGVGYAMSVAG), and 460–480 (IGIPGLLLTLFVGMFDALAYA). His65 is a binding site for Fe(II)-heme a. Positions 235, 239, 284, and 285 each coordinate Cu cation. The 1'-histidyl-3'-tyrosine (His-Tyr) cross-link spans 235–239 (HPVVY). His372 is a binding site for heme a3. Fe(II)-heme a is bound at residue His374.

It belongs to the heme-copper respiratory oxidase family.

The protein resides in the cell membrane. It carries out the reaction 2 a quinol + O2 = 2 a quinone + 2 H2O. In terms of biological role, catalyzes the reduction of oxygen to water. Subunits I, II and III form the functional core of the enzyme complex. Electrons originating in caldariella quinol are transferred to the binuclear center formed by heme A3 and Cu(B). Its function is as follows. Subunit I binds heme a and the bimetallic center. This is Quinol oxidase subunit 1 (soxB) from Sulfolobus acidocaldarius (strain ATCC 33909 / DSM 639 / JCM 8929 / NBRC 15157 / NCIMB 11770).